The primary structure comprises 399 residues: Digeranylgeranylglycerophospholipid reductase (399 aa).

Glycine 15, glutamate 34, cysteine 45, alanine 46, glycine 48, arginine 99, alanine 123, aspartate 280, glycine 292, and isoleucine 293 together coordinate FAD.

Belongs to the geranylgeranyl reductase family. DGGGPL reductase subfamily. Requires FAD as cofactor.

The catalysed reaction is a 2,3-bis-O-phytanyl-sn-glycerol 1-phospholipid + 8 oxidized 2[4Fe-4S]-[ferredoxin] = a 2,3-bis-O-(geranylgeranyl)-sn-glycerol 1-phospholipid + 8 reduced 2[4Fe-4S]-[ferredoxin] + 16 H(+). The enzyme catalyses 2,3-bis-O-(phytanyl)-sn-glycerol 1-phosphate + 8 oxidized 2[4Fe-4S]-[ferredoxin] = 2,3-bis-O-(geranylgeranyl)-sn-glycerol 1-phosphate + 8 reduced 2[4Fe-4S]-[ferredoxin] + 16 H(+). It catalyses the reaction a 2,3-bis-O-phytanyl-sn-glycerol 1-phospholipid + 8 A = a 2,3-bis-O-(geranylgeranyl)-sn-glycerol 1-phospholipid + 8 AH2. It carries out the reaction CDP-2,3-bis-O-(geranylgeranyl)-sn-glycerol + 8 AH2 = CDP-2,3-bis-O-(phytanyl)-sn-glycerol + 8 A. The catalysed reaction is archaetidylserine + 8 AH2 = 2,3-bis-O-phytanyl-sn-glycero-3-phospho-L-serine + 8 A. It participates in membrane lipid metabolism; glycerophospholipid metabolism. In terms of biological role, is involved in the reduction of 2,3-digeranylgeranylglycerophospholipids (unsaturated archaeols) into 2,3-diphytanylglycerophospholipids (saturated archaeols) in the biosynthesis of archaeal membrane lipids. Catalyzes the formation of archaetidic acid (2,3-di-O-phytanyl-sn-glyceryl phosphate) from 2,3-di-O-geranylgeranylglyceryl phosphate (DGGGP) via the hydrogenation of each double bond of the isoprenoid chains. Is also probably able to reduce double bonds of geranyl groups in CDP-2,3-bis-O-(geranylgeranyl)-sn-glycerol and archaetidylserine, thus acting at various stages in the biosynthesis of archaeal membrane lipids. In Methanosphaerula palustris (strain ATCC BAA-1556 / DSM 19958 / E1-9c), this protein is Digeranylgeranylglycerophospholipid reductase.